The chain runs to 768 residues: Mitochondrial 15S rRNA processing factor CCM1 (768 aa).

The N-terminal 90 residues, 1-90 (MIRLIRWNNV…RSFTKVIAQH (90 aa)), are a transit peptide targeting the mitochondrion. 2 disordered regions span residues 28-65 (NKRKRRIPPSKPRSSNRKDGDIEPYRMTDQNQTPNTGS) and 90-114 (HLKPEQENDSLTSAEKPDTSQLPPI). Positions 43–53 (NRKDGDIEPYR) are enriched in basic and acidic residues. Positions 55–65 (TDQNQTPNTGS) are enriched in polar residues. PPR repeat units lie at residues 274–308 (KIDHYETMILAYVKNNHMEKIDGILAQMKKKNIEI), 309–344 (SKMIYTSIVRGYIFYQKDHQRALDTFDSMKFLSQKT), 347–381 (DEKVYTDVIVSCVMHREIERALDLYYELKDKGMNV), 382–417 (NQNLLSTLAKGCSRSKQFKTQAWNFLFQVYDHGWVP), and 418–452 (NLQTYEHMLYIAARDGDVELTRVLFYKMLQTNSVT). A compositionally biased stretch (basic and acidic residues) spans 583 to 596 (IEPRQDEPTEKATT). Positions 583-609 (IEPRQDEPTEKATTTEEQNASSETDNN) are disordered. Residues 597–609 (TEEQNASSETDNN) show a composition bias toward polar residues. The stretch at 634–664 (DSYLYNLAIKAAGKFKNYGFAQEILHERGQF) is one PPR 6 repeat.

Belongs to the CCM1 family. In terms of assembly, binds to mitochondrial small subunit 15S rRNA.

The protein localises to the mitochondrion. Functionally, regulates mitochondrial small subunit maturation by controlling 15S rRNA 5'-end processing. Localizes to the 5' precursor of the 15S rRNA in a position that is subsequently occupied by mS47 in the mature yeast mtSSU. Uses structure and sequence-specific RNA recognition, binding to a single-stranded region of the precursor and specifically recognizing bases -6 to -1. The exchange of Ccm1 for mS47 is coupled to the irreversible removal of precursor rRNA that is accompanied by conformational changes of the mitoribosomal proteins uS5m and mS26. These conformational changes signal completion of 5'-end rRNA processing through protection of the mature 5'-end of the 15S rRNA and stabilization of mS47. The removal of the 5' precursor together with the dissociation of Ccm1 may be catalyzed by the 5'-3' exoribonuclease Pet127. Involved in the specific removal of group I introns in mitochondrial encoded transcripts. The polypeptide is Mitochondrial 15S rRNA processing factor CCM1 (CCM1) (Candida albicans (strain SC5314 / ATCC MYA-2876) (Yeast)).